A 447-amino-acid polypeptide reads, in one-letter code: Phosphoglucosamine mutase (447 aa).

S101 (phosphoserine intermediate) is an active-site residue. Positions 101, 242, 244, and 246 each coordinate Mg(2+). Position 101 is a phosphoserine (S101).

The protein belongs to the phosphohexose mutase family. Mg(2+) is required as a cofactor. Post-translationally, activated by phosphorylation.

The catalysed reaction is alpha-D-glucosamine 1-phosphate = D-glucosamine 6-phosphate. Functionally, catalyzes the conversion of glucosamine-6-phosphate to glucosamine-1-phosphate. The chain is Phosphoglucosamine mutase from Azorhizobium caulinodans (strain ATCC 43989 / DSM 5975 / JCM 20966 / LMG 6465 / NBRC 14845 / NCIMB 13405 / ORS 571).